Reading from the N-terminus, the 2067-residue chain is Nuclear receptor coactivator 6 (2067 aa).

The interval 1 to 932 (MVLDDLPNFE…PPRKKKNCHQ (932 aa)) is TBP/GTF2A-binding region. Residues 1-1060 (MVLDDLPNFE…LPVSQNVHPP (1060 aa)) are CREBBP-binding region. Residues 1-1314 (MVLDDLPNFE…QAHKLDSVVV (1314 aa)) are NCOA1-binding region. Asymmetric dimethylarginine is present on Arg-95. 2 disordered regions span residues 181 to 253 (AVMT…RQMN) and 293 to 548 (TRPL…PGNS). Positions 293-304 (TRPLQQHQQQPQ) are enriched in low complexity. Polar residues-rich tracts occupy residues 338–347 (SLGTMTTNQG), 357–372 (MQAQ…TVQT), 383–405 (GSQQ…QFTA), 421–457 (PLQQ…QQQM), 465–506 (NPLS…QGPQ), and 526–548 (GQAN…PGNS). The tract at residues 777–931 (VNNSPSQVMG…KPPRKKKNCH (155 aa)) is NCOA6IP-binding region. Ser-888 carries the post-translational modification Phosphoserine. The LXXLL motif 1 signature appears at 891 to 895 (LVNLL). 5 disordered regions span residues 903–1279 (HFGV…QGLN), 1313–1358 (VVNS…APKL), 1424–1481 (NIPQ…EENK), 1497–1581 (QLLD…IPPV), and 1769–1822 (LNPD…GKGK). The segment covering 907-916 (NNKQNNTNAN) has biased composition (low complexity). A compositionally biased stretch (basic residues) spans 917–929 (KPKKKKPPRKKKN). Low complexity predominate over residues 984–996 (QRPLPQMPPQLMQ). Residues 999-1024 (APPPQPPQQQPQPQLPQQQQPPPPSQ) are compositionally biased toward pro residues. Residues 1025–1044 (PQSQQQQQQQQMMMMLMMQQ) show a composition bias toward low complexity. Asymmetric dimethylarginine occurs at positions 1050 and 1061. A compositionally biased stretch (polar residues) spans 1066–1078 (PDSQRMPVQQSGN). Residue Arg-1099 is modified to Asymmetric dimethylarginine. Positions 1103 to 1123 (SVNTPMGSNSRKMVYQENPQN) are enriched in polar residues. Residues 1124 to 1137 (SSSSPLGEMSSLPE) are compositionally biased toward low complexity. Composition is skewed to polar residues over residues 1152–1165 (NMPS…NQLM), 1176–1194 (LSAT…SLPS), and 1205–1217 (APTQ…TPNR). The segment covering 1222 to 1235 (PYYPQTPNNRPPST) has biased composition (pro residues). Over residues 1313 to 1324 (VVNSGKQSNPGT) the composition is skewed to polar residues. Over residues 1326–1349 (KRASPSNSRRSSPGSSRKTTPSPG) the composition is skewed to low complexity. The span at 1424–1435 (NIPQDSDCQNAQ) shows a compositional bias: polar residues. The LXXLL motif 2 motif lies at 1495–1499 (LSQLL). Residues 1545–1562 (EPSTSLSSPHSSEPCSTL) are compositionally biased toward low complexity. The EP300/CRSP3-binding region stretch occupies residues 1644-2067 (SEGQSAAQSN…AVQSKRRKSK (424 aa)). Residues 1775-1805 (SPQTNTSADQSTLPPSQPTTVVSSLLTNSPG) show a composition bias toward polar residues. A compositionally biased stretch (low complexity) spans 1806–1818 (SSANRRSPVSSSK). Lys-1822 and Lys-1825 each carry N6-acetyllysine. 2 disordered regions span residues 1840–1911 (GSLE…LPGG) and 1957–2067 (VGSH…RKSK). Polar residues predominate over residues 1871-1883 (EQCSTELDSKTPT). The span at 1892–1904 (MTSSPMAPSSTST) shows a compositional bias: low complexity. Residues 2005–2014 (EPKEIVEKSK) show a composition bias toward basic and acidic residues. Position 2022 is a phosphoserine (Ser-2022).

Monomer and homodimer. Interacts in vitro with the basal transcription factors GTF2A and TBP, suggesting an autonomous transactivation function. Interacts with NCOA1, CRSP3, RBM14, the histone acetyltransferase proteins EP300 and CREBBP, and with methyltransferase proteins NCOA6IP and PRMT2. Interacts with RBM39. Component of the MLL2/3 complex (also named ASCOM complex), at least composed of KMT2D/MLL2 or KMT2C/MLL3, ASH2L, RBBP5, WDR5, NCOA6, DPY30, KDM6A, PAXIP1/PTIP, PAGR1 and alpha- and beta-tubulin. Interacts with ZNF335; may enhance ligand-dependent transcriptional activation by nuclear hormone receptors. Phosphorylated. As to expression, widely expressed. High expression in testis and weak expression in small intestine.

It is found in the nucleus. In terms of biological role, nuclear receptor coactivator that directly binds nuclear receptors and stimulates the transcriptional activities in a hormone-dependent fashion. Coactivates expression in an agonist- and AF2-dependent manner. Involved in the coactivation of different nuclear receptors, such as for steroids (GR and ERs), retinoids (RARs and RXRs), thyroid hormone (TRs), vitamin D3 (VDR) and prostanoids (PPARs). Probably functions as a general coactivator, rather than just a nuclear receptor coactivator. May also be involved in the coactivation of the NF-kappa-B pathway. May coactivate expression via a remodeling of chromatin and its interaction with histone acetyltransferase proteins. Involved in placental, cardiac, hepatic and embryonic development. The sequence is that of Nuclear receptor coactivator 6 (Ncoa6) from Mus musculus (Mouse).